Here is a 261-residue protein sequence, read N- to C-terminus: Protein OSB1, mitochondrial (261 aa).

Residues 1–28 constitute a mitochondrion transit peptide; the sequence is MNTFFKLGSLIQRTASQISSSFPKSRFF. The SSB domain maps to 55 to 155; that stretch reads VNSVSLMGFV…VKVAEVNYVA (101 aa). The interval 189–238 is PDF region; it reads WQVFFSNPYDWWDNRRNKKNPKQPDFKHKDTGEALWLCSDLPDWITRRLE.

Expressed in root elongation zone and in gametophytic cells.

It is found in the mitochondrion. Functionally, regulates mitochondrial DNA recombination. Represses homologous recombination, preventing mitochondrial genome instability and unbalanced transmission of alternative mtDNA configurations. Binds preferentially single-stranded DNA. Does not bind to RNA. This is Protein OSB1, mitochondrial (OSB1) from Arabidopsis thaliana (Mouse-ear cress).